Reading from the N-terminus, the 218-residue chain is tRNA (guanine-N(7)-)-methyltransferase (218 aa).

Residues 1-25 (MRLKNKPWANELVEEHPESALDRPN) form a disordered region. The span at 13 to 25 (VEEHPESALDRPN) shows a compositional bias: basic and acidic residues. S-adenosyl-L-methionine is bound by residues glutamate 45, glutamate 70, aspartate 97, and aspartate 119. Aspartate 119 is a catalytic residue. Lysine 123 is a substrate binding site. The tract at residues 125-130 (RHEKRR) is interaction with RNA. Residues aspartate 155 and 195–198 (TEYE) contribute to the substrate site.

It belongs to the class I-like SAM-binding methyltransferase superfamily. TrmB family.

The enzyme catalyses guanosine(46) in tRNA + S-adenosyl-L-methionine = N(7)-methylguanosine(46) in tRNA + S-adenosyl-L-homocysteine. The protein operates within tRNA modification; N(7)-methylguanine-tRNA biosynthesis. Its function is as follows. Catalyzes the formation of N(7)-methylguanine at position 46 (m7G46) in tRNA. The sequence is that of tRNA (guanine-N(7)-)-methyltransferase from Lactobacillus delbrueckii subsp. bulgaricus (strain ATCC BAA-365 / Lb-18).